We begin with the raw amino-acid sequence, 183 residues long: Dual-action ribosomal maturation protein DarP (183 aa).

The disordered stretch occupies residues 1–20 (MKQKYEDWLNDVPDNQEDDE).

This sequence belongs to the DarP family.

It localises to the cytoplasm. Its function is as follows. Member of a network of 50S ribosomal subunit biogenesis factors which assembles along the 30S-50S interface, preventing incorrect 23S rRNA structures from forming. Promotes peptidyl transferase center (PTC) maturation. In Pectobacterium carotovorum subsp. carotovorum (strain PC1), this protein is Dual-action ribosomal maturation protein DarP.